A 153-amino-acid chain; its full sequence is UPF0756 membrane protein Lm4b_01579 (153 aa).

Helical transmembrane passes span 6 to 26 (MLFL…SLII), 54 to 74 (WGVT…QIGF), 80 to 100 (SFKS…SILA), and 117 to 137 (LVFG…GPVI).

This sequence belongs to the UPF0756 family.

It is found in the cell membrane. The protein is UPF0756 membrane protein Lm4b_01579 of Listeria monocytogenes serotype 4b (strain CLIP80459).